The sequence spans 212 residues: Peptide methionine sulfoxide reductase MsrA (212 aa).

The active site involves Cys52.

The protein belongs to the MsrA Met sulfoxide reductase family.

The catalysed reaction is L-methionyl-[protein] + [thioredoxin]-disulfide + H2O = L-methionyl-(S)-S-oxide-[protein] + [thioredoxin]-dithiol. The enzyme catalyses [thioredoxin]-disulfide + L-methionine + H2O = L-methionine (S)-S-oxide + [thioredoxin]-dithiol. In terms of biological role, has an important function as a repair enzyme for proteins that have been inactivated by oxidation. Catalyzes the reversible oxidation-reduction of methionine sulfoxide in proteins to methionine. The polypeptide is Peptide methionine sulfoxide reductase MsrA (Salmonella paratyphi B (strain ATCC BAA-1250 / SPB7)).